We begin with the raw amino-acid sequence, 398 residues long: Phosphoglycerate kinase (398 aa).

Residues 21 to 23 (DFN), Arg36, 59 to 62 (HLGR), Arg119, and Arg157 contribute to the substrate site. ATP-binding positions include Lys208, Gly296, Glu327, and 354-357 (GGDS).

Belongs to the phosphoglycerate kinase family. In terms of assembly, monomer.

The protein resides in the cytoplasm. The catalysed reaction is (2R)-3-phosphoglycerate + ATP = (2R)-3-phospho-glyceroyl phosphate + ADP. Its pathway is carbohydrate degradation; glycolysis; pyruvate from D-glyceraldehyde 3-phosphate: step 2/5. This chain is Phosphoglycerate kinase, found in Streptococcus equi subsp. equi (strain 4047).